A 459-amino-acid polypeptide reads, in one-letter code: Glutamate--tRNA ligase 2 (459 aa).

A 'HIGH' region motif is present at residues 8–18 (PSPTGYIHIGN). The 'KMSKS' region motif lies at 249–253 (GLSKR). Residue Lys-252 coordinates ATP.

Belongs to the class-I aminoacyl-tRNA synthetase family. Glutamate--tRNA ligase type 1 subfamily. As to quaternary structure, monomer.

It localises to the cytoplasm. The enzyme catalyses tRNA(Glu) + L-glutamate + ATP = L-glutamyl-tRNA(Glu) + AMP + diphosphate. Functionally, catalyzes the attachment of glutamate to tRNA(Glu) in a two-step reaction: glutamate is first activated by ATP to form Glu-AMP and then transferred to the acceptor end of tRNA(Glu). The protein is Glutamate--tRNA ligase 2 of Bartonella henselae (strain ATCC 49882 / DSM 28221 / CCUG 30454 / Houston 1) (Rochalimaea henselae).